The primary structure comprises 249 residues: Meiotic drive suppressor wtf25 (249 aa).

Residues 1–40 (MKNNYTSLKSPLDEEDELKTDHEIDLEKGPLPEYDSEEEG) are disordered. Residues 19–30 (KTDHEIDLEKGP) show a composition bias toward basic and acidic residues. 4 consecutive transmembrane segments (helical) span residues 73–93 (LLIILLISFTSIILFNAPAFC), 110–130 (WTLFGFWCLVCTLALIFLTYF), 151–170 (NMIFAFCKSSLFCLVLLKAE), and 187–207 (SASAFTFMAVSSILIFIAETV).

It belongs to the WTF family. In terms of assembly, homomer. Interacts with other proteins that exhibit high sequence similarity.

It localises to the spore membrane. Its subcellular location is the vacuole membrane. Functionally, acts as a suppressor component of the dual wtf meiotic drive system, and can suppress but not confer meiotic drive by compatible poisons. Wtf meiotic drive systems promote unequal transmission of alleles from the parental zygote to progeny spores by encoding a poison and an antidote from the same locus; the poison is trans-acting and forms toxic aggregates in all spores within an ascus, wherease the antidote is spore-specific and targets aggregates for degradation by the vacuole. Meiotic drive by wtf systems therefore lead to poisoning of all progeny that do not inherit the dual poison/antidote allele, or express a compatible antidote. The sequence is that of Meiotic drive suppressor wtf25 from Schizosaccharomyces pombe (strain 972 / ATCC 24843) (Fission yeast).